A 281-amino-acid polypeptide reads, in one-letter code: 3-deoxy-manno-octulosonate cytidylyltransferase (281 aa).

The protein belongs to the KdsB family.

Its subcellular location is the cytoplasm. It carries out the reaction 3-deoxy-alpha-D-manno-oct-2-ulosonate + CTP = CMP-3-deoxy-beta-D-manno-octulosonate + diphosphate. It functions in the pathway nucleotide-sugar biosynthesis; CMP-3-deoxy-D-manno-octulosonate biosynthesis; CMP-3-deoxy-D-manno-octulosonate from 3-deoxy-D-manno-octulosonate and CTP: step 1/1. The protein operates within bacterial outer membrane biogenesis; lipopolysaccharide biosynthesis. In terms of biological role, activates KDO (a required 8-carbon sugar) for incorporation into bacterial lipopolysaccharide in Gram-negative bacteria. This chain is 3-deoxy-manno-octulosonate cytidylyltransferase, found in Xanthomonas campestris pv. campestris (strain B100).